A 443-amino-acid polypeptide reads, in one-letter code: 3-ketoacyl-CoA thiolase 1, peroxisomal (443 aa).

The N-terminal 30 residues, 1–30 (MEKATERQRILLRHLQPSSSSDASLSASAC), are a transit peptide targeting the peroxisome. The active-site Acyl-thioester intermediate is Cys130. Active-site proton acceptor residues include His385 and Cys417.

Belongs to the thiolase-like superfamily. Thiolase family. In terms of assembly, homodimer. In terms of tissue distribution, low levels in seedlings and leaves.

Its subcellular location is the peroxisome. It catalyses the reaction an acyl-CoA + acetyl-CoA = a 3-oxoacyl-CoA + CoA. Its pathway is lipid metabolism; fatty acid metabolism. Functionally, involved in fatty-acid beta-oxidation prior to gluconeogenesis during germination and subsequent seedling growth. Implicated in jasmonic acid (JA) biosynthesis. In Arabidopsis thaliana (Mouse-ear cress), this protein is 3-ketoacyl-CoA thiolase 1, peroxisomal (KAT1).